A 1298-amino-acid chain; its full sequence is Phosphoribosylformylglycinamidine synthase (1298 aa).

The tract at residues 303–327 is disordered; sequence FPGAATGSGGEIRDEGATGRGAKPK. ATP is bound by residues 305–316, 384–386, and Ala-676; these read GAATGSGGEIRD and TGY. Asp-677, Glu-716, Asn-720, and Asp-884 together coordinate Mg(2+). Position 886 (Ser-886) interacts with ATP. One can recognise a Glutamine amidotransferase type-1 domain in the interval 1045 to 1298; it reads VAVLREQGVN…MFRNARAWVN (254 aa). Cys-1138 acts as the Nucleophile in catalysis. Residues His-1263 and Glu-1265 contribute to the active site.

It in the N-terminal section; belongs to the FGAMS family. Monomer.

It localises to the cytoplasm. The enzyme catalyses N(2)-formyl-N(1)-(5-phospho-beta-D-ribosyl)glycinamide + L-glutamine + ATP + H2O = 2-formamido-N(1)-(5-O-phospho-beta-D-ribosyl)acetamidine + L-glutamate + ADP + phosphate + H(+). It functions in the pathway purine metabolism; IMP biosynthesis via de novo pathway; 5-amino-1-(5-phospho-D-ribosyl)imidazole from N(2)-formyl-N(1)-(5-phospho-D-ribosyl)glycinamide: step 1/2. In terms of biological role, phosphoribosylformylglycinamidine synthase involved in the purines biosynthetic pathway. Catalyzes the ATP-dependent conversion of formylglycinamide ribonucleotide (FGAR) and glutamine to yield formylglycinamidine ribonucleotide (FGAM) and glutamate. In Pseudomonas syringae pv. syringae (strain B728a), this protein is Phosphoribosylformylglycinamidine synthase.